Here is a 211-residue protein sequence, read N- to C-terminus: Uracil phosphoribosyltransferase (211 aa).

5-phospho-alpha-D-ribose 1-diphosphate is bound by residues Arg-78, Arg-103, and 130–138; that span reads DPMLATGAT. Residues Ile-195 and 200 to 202 contribute to the uracil site; that span reads GDA. 5-phospho-alpha-D-ribose 1-diphosphate is bound at residue Asp-201.

It belongs to the UPRTase family. Mg(2+) is required as a cofactor.

It catalyses the reaction UMP + diphosphate = 5-phospho-alpha-D-ribose 1-diphosphate + uracil. It participates in pyrimidine metabolism; UMP biosynthesis via salvage pathway; UMP from uracil: step 1/1. Its activity is regulated as follows. Allosterically activated by GTP. Catalyzes the conversion of uracil and 5-phospho-alpha-D-ribose 1-diphosphate (PRPP) to UMP and diphosphate. In Renibacterium salmoninarum (strain ATCC 33209 / DSM 20767 / JCM 11484 / NBRC 15589 / NCIMB 2235), this protein is Uracil phosphoribosyltransferase.